The following is a 1073-amino-acid chain: Self-sufficient cytochrome P450 monooxygenase CYP505AG1 (1073 aa).

Cys409 contributes to the heme binding site. In terms of domain architecture, Flavodoxin-like spans 501-644; it reads VTILYGSNSG…DLENWEDEHL (144 aa). FMN contacts are provided by residues 507-511 and 588-620; these read SNSGT and VFACGHHDWAKTFYKVPIMIDELLARAGAHRVA. The 230-residue stretch at 680-909 folds into the FAD-binding FR-type domain; it reads HNAVECIVSE…RPCKKQFHLP (230 aa).

It in the N-terminal section; belongs to the cytochrome P450 family. Requires FAD as cofactor. FMN serves as cofactor. The cofactor is heme.

The enzyme catalyses 2 oxidized [cytochrome P450] + NADPH = 2 reduced [cytochrome P450] + NADP(+) + H(+). It carries out the reaction an organic molecule + reduced [NADPH--hemoprotein reductase] + O2 = an alcohol + oxidized [NADPH--hemoprotein reductase] + H2O + H(+). It catalyses the reaction dodecanoate + reduced [NADPH--hemoprotein reductase] + O2 = 10-hydroxydodecanoate + oxidized [NADPH--hemoprotein reductase] + H2O + H(+). The catalysed reaction is tetradecanoate + reduced [NADPH--hemoprotein reductase] + O2 = 12-hydroxytetradecanoate + oxidized [NADPH--hemoprotein reductase] + H2O + H(+). Its function is as follows. Self-sufficient cytochrome P450 monooxygenase that catalyzes the regioselective in-chain hydroxylation of alkanes, fatty alcohols, and fatty acids, giving sub-terminal hydroxylation by acting preferentially on the omega-2 position. Prefers fatty acids as substrates, since it hydroxylates the small amounts of dodecanoic acid formed in the presence of an excess of 1-dodecanol. This is Self-sufficient cytochrome P450 monooxygenase CYP505AG1 from Oidiodendron maius (strain Zn).